The chain runs to 534 residues: Hypothemycin biosynthesis cluster protein hpm4 (534 aa).

Disordered stretches follow at residues Ile-34–Pro-61, Leu-110–Leu-130, and Asp-236–Ile-287. Composition is skewed to low complexity over residues Ser-112–Pro-127 and Thr-258–Thr-275.

It functions in the pathway secondary metabolite biosynthesis. Functionally, part of the gene cluster that mediates the biosynthesis of hypothemycin, a resorcylic acid lactone (RAL) that irreversibly inhibits a subset of protein kinases with a conserved cysteine in the ATP binding site such as human ERK2. The first step is performed by both PKSs hmp3 and hmp8 and leads to the production of 7',8'-dehydrozearalenol (DHZ). The highly reducing PKS hpm8 synthesizes the reduced hexaketide (7S,11S,2E,8E)-7,11-dihydroxy-dodeca-2,8-dienoate, which is transferred downstream to the non-reducing PKS hpm3. Hpm3 then extends the reduced hexaketide to a nonaketide, after which regioselective cyclization and macrolactonization affords DHZ. The next step is the conversion of DHZ into aigialomycin C and is performed by the O-methyltransferase hmp5, the FAD-binding monooxygenase hmp7, and the cytochrome P450 monooxygenase hmp1. The wide substrate tolerance of the hmp5 and hmp7 implies that the reactions from DHZ to aigialomycin C can occur in any order. The steps from aigialomycin C to hypothemycin are less well established. The FAD-linked oxidoreductase hmp9 presumably catalyzes oxidation of the C-6' hydroxyl to a ketone. The timing of this oxidation is important, since the resulting enone functional group is a Michael acceptor that can react spontaneously with glutathione, an abundant metabolite in fungal cells. The glutathione S-transferase hmp2 catalyzes cis-trans isomerization of the 7',8' double bond with equilibrium favoring the trans isomer. The hpm6-encoded transporter might preferentially pump hypothemycin out of the cell relative to the trans isomer aigialomycin A. The cis-to-trans isomerization may be coupled with C-4' hydroxylation, since all known hypothemycin analogs containing the enone functional group also have hydroxyl groups at both C-4' and C-5'. This Hypomyces subiculosus (Nectria subiculosa) protein is Hypothemycin biosynthesis cluster protein hpm4.